Reading from the N-terminus, the 396-residue chain is Formate-dependent phosphoribosylglycinamide formyltransferase (396 aa).

Residues 25–26 and Glu-85 each bind N(1)-(5-phospho-beta-D-ribosyl)glycinamide; that span reads EL. ATP-binding positions include Arg-117, Lys-158, 163–168, 198–201, and Glu-206; these read SSGKGQ and EAFI. Residues 122–311 enclose the ATP-grasp domain; the sequence is RLAAETLAIP…EFALHVRAIL (190 aa). Mg(2+) contacts are provided by Glu-270 and Glu-282. Residues Asp-289, Lys-359, and 366–367 each bind N(1)-(5-phospho-beta-D-ribosyl)glycinamide; that span reads RR.

This sequence belongs to the PurK/PurT family. As to quaternary structure, homodimer.

It catalyses the reaction N(1)-(5-phospho-beta-D-ribosyl)glycinamide + formate + ATP = N(2)-formyl-N(1)-(5-phospho-beta-D-ribosyl)glycinamide + ADP + phosphate + H(+). It participates in purine metabolism; IMP biosynthesis via de novo pathway; N(2)-formyl-N(1)-(5-phospho-D-ribosyl)glycinamide from N(1)-(5-phospho-D-ribosyl)glycinamide (formate route): step 1/1. Functionally, involved in the de novo purine biosynthesis. Catalyzes the transfer of formate to 5-phospho-ribosyl-glycinamide (GAR), producing 5-phospho-ribosyl-N-formylglycinamide (FGAR). Formate is provided by PurU via hydrolysis of 10-formyl-tetrahydrofolate. This Shewanella frigidimarina (strain NCIMB 400) protein is Formate-dependent phosphoribosylglycinamide formyltransferase.